The primary structure comprises 319 residues: MPNVDDIRIFHGSANPSLAENVAKELNTTIGNALISRFSDGEIRFEIEENVRGRDIYLIQSTGHPTNEHVMELILMGDAFRRASAASITAVVPYFGYARQDRRVRSSRVPISAKVVADMMQKVGFSRLITVDLHADQIQGFFYMPVDNIYASITALEEYRLLDKLETPMIVSPDVGGVVRARAIAKRLNDSDLAIIDKRRPAPNQAEVMNVIGNVQNRHCVIVDDIVDTAGTLCHAASALKEKGALTVSSYCTHPVLSGNAVKNIMDSDIDELIVTDTIPLHEEAAKCRKITQISLSRLIAETISRINQKESVSSMFLD.

ATP-binding positions include 40-42 and 99-100; these read DGE and RQ. Mg(2+) contacts are provided by His-134 and Asp-174. The active site involves Lys-198. D-ribose 5-phosphate contacts are provided by residues Arg-200, Asp-224, and 228 to 232; that span reads DTAGT.

It belongs to the ribose-phosphate pyrophosphokinase family. Class I subfamily. As to quaternary structure, homohexamer. The cofactor is Mg(2+).

It is found in the cytoplasm. The catalysed reaction is D-ribose 5-phosphate + ATP = 5-phospho-alpha-D-ribose 1-diphosphate + AMP + H(+). It participates in metabolic intermediate biosynthesis; 5-phospho-alpha-D-ribose 1-diphosphate biosynthesis; 5-phospho-alpha-D-ribose 1-diphosphate from D-ribose 5-phosphate (route I): step 1/1. Its function is as follows. Involved in the biosynthesis of the central metabolite phospho-alpha-D-ribosyl-1-pyrophosphate (PRPP) via the transfer of pyrophosphoryl group from ATP to 1-hydroxyl of ribose-5-phosphate (Rib-5-P). In Coxiella burnetii (strain RSA 493 / Nine Mile phase I), this protein is Ribose-phosphate pyrophosphokinase.